A 160-amino-acid polypeptide reads, in one-letter code: Cytochrome b6-f complex subunit 4 (160 aa).

The next 3 membrane-spanning stretches (helical) occupy residues 36–56 (LLYI…GLSV), 95–115 (LLGV…PFIE), and 131–151 (TVFL…ALPI).

This sequence belongs to the cytochrome b family. PetD subfamily. In terms of assembly, the 4 large subunits of the cytochrome b6-f complex are cytochrome b6, subunit IV (17 kDa polypeptide, petD), cytochrome f and the Rieske protein, while the 4 small subunits are petG, petL, petM and petN. The complex functions as a dimer.

The protein localises to the plastid. Its subcellular location is the chloroplast thylakoid membrane. In terms of biological role, component of the cytochrome b6-f complex, which mediates electron transfer between photosystem II (PSII) and photosystem I (PSI), cyclic electron flow around PSI, and state transitions. This is Cytochrome b6-f complex subunit 4 from Chlorella vulgaris (Green alga).